We begin with the raw amino-acid sequence, 132 residues long: Small ribosomal subunit protein uS8c (132 aa).

This sequence belongs to the universal ribosomal protein uS8 family. Part of the 30S ribosomal subunit.

It is found in the plastid. Its subcellular location is the chloroplast. One of the primary rRNA binding proteins, it binds directly to 16S rRNA central domain where it helps coordinate assembly of the platform of the 30S subunit. The polypeptide is Small ribosomal subunit protein uS8c (rps8) (Anthoceros angustus (Hornwort)).